A 252-amino-acid chain; its full sequence is UPF0246 protein AM1_4276 (252 aa).

The protein belongs to the UPF0246 family.

The polypeptide is UPF0246 protein AM1_4276 (Acaryochloris marina (strain MBIC 11017)).